We begin with the raw amino-acid sequence, 541 residues long: Propionyl-CoA carboxylase beta chain, mitochondrial (541 aa).

The N-terminal 28 residues, 1-28 (MAAAIRIRAVAAGARLSVLNCGLGITTR), are a transit peptide targeting the mitochondrion. The region spanning 34–292 (PVSVKERIDN…SSQDPAPIRE (259 aa)) is the CoA carboxyltransferase N-terminal domain. The carboxyltransferase stretch occupies residues 34–535 (PVSVKERIDN…SKKVHRPWRK (502 aa)). Serine 73 is modified (phosphoserine). An N6-acetyllysine; alternate modification is found at lysine 101. Lysine 101 carries the post-translational modification N6-succinyllysine; alternate. The residue at position 250 (lysine 250) is an N6-succinyllysine. One can recognise a CoA carboxyltransferase C-terminal domain in the interval 296–535 (PSDRLVPELD…SKKVHRPWRK (240 aa)). The tract at residues 327 to 360 (DEREFFEIMPSYAKNIVVGFARMNGRTVGIVGNQ) is acyl-CoA binding. Lysine 476 and lysine 491 each carry N6-acetyllysine; alternate. Residues lysine 476 and lysine 491 each carry the N6-succinyllysine; alternate modification.

It belongs to the AccD/PCCB family. In terms of assembly, the holoenzyme is a dodecamer composed of 6 PCCA/alpha subunits and 6 PCCB/beta subunits. As to expression, broadly expressed. Most abundantly expressed in the kidney, liver, small intestine and stomach.

The protein localises to the mitochondrion matrix. It carries out the reaction propanoyl-CoA + hydrogencarbonate + ATP = (S)-methylmalonyl-CoA + ADP + phosphate + H(+). The catalysed reaction is butanoyl-CoA + hydrogencarbonate + ATP = (2S)-ethylmalonyl-CoA + ADP + phosphate + H(+). Its pathway is metabolic intermediate metabolism; propanoyl-CoA degradation; succinyl-CoA from propanoyl-CoA: step 1/3. This is one of the 2 subunits of the biotin-dependent propionyl-CoA carboxylase (PCC), a mitochondrial enzyme involved in the catabolism of odd chain fatty acids, branched-chain amino acids isoleucine, threonine, methionine, and valine and other metabolites. Propionyl-CoA carboxylase catalyzes the carboxylation of propionyl-CoA/propanoyl-CoA to D-methylmalonyl-CoA/(S)-methylmalonyl-CoA. Within the holoenzyme, the alpha subunit catalyzes the ATP-dependent carboxylation of the biotin carried by the biotin carboxyl carrier (BCC) domain, while the beta subunit then transfers the carboxyl group from carboxylated biotin to propionyl-CoA. Propionyl-CoA carboxylase also significantly acts on butyryl-CoA/butanoyl-CoA, which is converted to ethylmalonyl-CoA/(2S)-ethylmalonyl-CoA. Other alternative minor substrates include (2E)-butenoyl-CoA/crotonoyl-CoA. The chain is Propionyl-CoA carboxylase beta chain, mitochondrial from Mus musculus (Mouse).